Here is a 1196-residue protein sequence, read N- to C-terminus: Beta/alpha-amylase (1196 aa).

Positions 1–35 (MTLYRSLWKKGCMLLLSLVLSLTAFIGSPSNTASA) are cleaved as a signal peptide. The tract at residues 36 to 454 (AVADDFQASV…IISKAKPDNN (419 aa)) is beta-amylase. Residue Asp-76 coordinates substrate. Residues Glu-83 and Asp-87 each coordinate Ca(2+). Substrate is bound by residues His-116 and Asp-124. Cysteines 118 and 126 form a disulfide. Residue Glu-170 participates in Ca(2+) binding. Glu-198 serves as the catalytic Proton donor. Substrate is bound by residues Lys-314, His-319, and Thr-357. Glu-394 (proton acceptor) is an active-site residue. Substrate is bound by residues 395–396 (NA) and Arg-423. 2 consecutive repeats follow at residues 455 to 558 (GGTG…APAG) and 565 to 668 (GGTT…APSG). A compositionally biased stretch (polar residues) spans 544–553 (NSGNAGTITS). The interval 544–566 (NSGNAGTITSGAPAGANPGDGGG) is disordered. Residues 669 to 1196 (SVLSVVTSTY…APKEVKVFTK (528 aa)) form an alpha-amylase region.

The protein in the N-terminal section; belongs to the glycosyl hydrolase 14 family. This sequence in the C-terminal section; belongs to the glycosyl hydrolase 13 family. It depends on Ca(2+) as a cofactor.

It localises to the secreted. The enzyme catalyses Hydrolysis of (1-&gt;4)-alpha-D-glucosidic linkages in polysaccharides so as to remove successive maltose units from the non-reducing ends of the chains.. The catalysed reaction is Endohydrolysis of (1-&gt;4)-alpha-D-glucosidic linkages in polysaccharides containing three or more (1-&gt;4)-alpha-linked D-glucose units.. In terms of biological role, the precursor protein is proteolytically cleaved to produce multiform beta-amylases and a 48 kDa alpha-amylase after secretion. The chain is Beta/alpha-amylase from Paenibacillus polymyxa (Bacillus polymyxa).